We begin with the raw amino-acid sequence, 39 residues long: Photosystem II reaction center protein L (39 aa).

A helical membrane pass occupies residues 18–38 (SLYLGLLLVFVLGILFSSYFF).

This sequence belongs to the PsbL family. As to quaternary structure, PSII is composed of 1 copy each of membrane proteins PsbA, PsbB, PsbC, PsbD, PsbE, PsbF, PsbH, PsbI, PsbJ, PsbK, PsbL, PsbM, PsbT, PsbX, PsbY, PsbZ, Psb30/Ycf12, peripheral proteins PsbO, CyanoQ (PsbQ), PsbU, PsbV and a large number of cofactors. It forms dimeric complexes.

Its subcellular location is the cellular thylakoid membrane. One of the components of the core complex of photosystem II (PSII). PSII is a light-driven water:plastoquinone oxidoreductase that uses light energy to abstract electrons from H(2)O, generating O(2) and a proton gradient subsequently used for ATP formation. It consists of a core antenna complex that captures photons, and an electron transfer chain that converts photonic excitation into a charge separation. This subunit is found at the monomer-monomer interface and is required for correct PSII assembly and/or dimerization. The chain is Photosystem II reaction center protein L from Trichormus variabilis (strain ATCC 29413 / PCC 7937) (Anabaena variabilis).